A 253-amino-acid chain; its full sequence is Prolactin-7A2 (253 aa).

The first 30 residues, 1–30 (MSFSFSQPCPSGALLLVVVSSLLLWENVAS), serve as a signal peptide directing secretion. Residues N36, N103, and N135 are each glycosylated (N-linked (GlcNAc...) asparagine). 2 cysteine pairs are disulfide-bonded: C101/C218 and C235/C244.

The protein belongs to the somatotropin/prolactin family. As to expression, expression restricted to the placental tissue. Expressed only in the spongiotrophoblasts.

The protein localises to the secreted. This chain is Prolactin-7A2 (Prl7a2), found in Mus musculus (Mouse).